The following is a 446-amino-acid chain: Protein IQ-DOMAIN 19 (446 aa).

Residues 93–140 are disordered; the sequence is IPGTPKEKRRWSFRRSSATGPPPPACAITLKDSPPPPPPPPPPPPLQQ. Positions 125–139 are enriched in pro residues; sequence SPPPPPPPPPPPPLQ. IQ domains lie at 163 to 191 and 192 to 214; these read EEFA…GLVK and LQAL…CMQA. The tract at residues 214–231 is calmodulin-binding; the sequence is ALITLQAKAREQRIRMIG. Over residues 332-345 the composition is skewed to low complexity; it reads QSSKAKARSQSAPK. The disordered stretch occupies residues 332–398; sequence QSSKAKARSQ…TAKESQQHHH (67 aa). Positions 379–392 are enriched in polar residues; sequence QRSSSQLGSNTAKE.

It belongs to the IQD family. Binds to multiple calmodulin (CaM) in the presence of Ca(2+) and CaM-like proteins.

The protein localises to the cytoplasm. It is found in the cytoskeleton. Its subcellular location is the cell membrane. Functionally, may be involved in cooperative interactions with calmodulins or calmodulin-like proteins. Recruits calmodulin proteins to microtubules, thus being a potential scaffold in cellular signaling and trafficking. Acts as a positive regulator of trichome branch initiation. May associate with nucleic acids and regulate gene expression at the transcriptional or post-transcriptional level. The sequence is that of Protein IQ-DOMAIN 19 from Arabidopsis thaliana (Mouse-ear cress).